A 123-amino-acid chain; its full sequence is Small ribosomal subunit protein uS11 (123 aa).

Belongs to the universal ribosomal protein uS11 family. Part of the 30S ribosomal subunit. Interacts with proteins S7 and S18. Binds to IF-3.

Its function is as follows. Located on the platform of the 30S subunit, it bridges several disparate RNA helices of the 16S rRNA. Forms part of the Shine-Dalgarno cleft in the 70S ribosome. This is Small ribosomal subunit protein uS11 from Coxiella burnetii (strain RSA 331 / Henzerling II).